A 514-amino-acid chain; its full sequence is Beta-galactoside alpha-2,6-sialyltransferase 2 (514 aa).

The Cytoplasmic portion of the chain corresponds to 1 to 10 (MKSSLKQWRR). Residues 11 to 31 (LALGLILVWALLFLALLSYFM) traverse the membrane as a helical; Signal-anchor for type II membrane protein segment. Residues 32–514 (ESRVDDPHAA…PGFNKVHCEP (483 aa)) are Lumenal-facing. Positions 70 to 92 (ATSSAPSTSSNTQQEQSQEENPS) are enriched in low complexity. Residues 70-183 (ATSSAPSTSS…TKRVARHGSS (114 aa)) are disordered. The segment covering 119–132 (FGTQDVGSRSTGVS) has biased composition (polar residues). The segment covering 145-166 (PQEDEDEEEEVIGGEEEDEEGG) has biased composition (acidic residues). Intrachain disulfides connect C246/C512, C289/C441, and C459/C470. N-linked (GlcNAc...) asparagine glycans are attached at residues N330, N350, and N357.

It belongs to the glycosyltransferase 29 family.

The protein resides in the golgi apparatus. It localises to the golgi stack membrane. It carries out the reaction a beta-D-galactoside + CMP-N-acetyl-beta-neuraminate = an N-acetyl-alpha-neuraminyl-(2-&gt;6)-beta-D-galactosyl derivative + CMP + H(+). Transfers sialic acid from the donor of substrate CMP-sialic acid to galactose containing acceptor substrates. The protein is Beta-galactoside alpha-2,6-sialyltransferase 2 (st6gal2) of Danio rerio (Zebrafish).